A 790-amino-acid chain; its full sequence is SH3 domain-containing protein 19 (790 aa).

Disordered regions lie at residues 21-196 (EGQT…PVLQ) and 241-374 (EPIK…MDLQ). At S65 the chain carries Phosphoserine. Positions 287–296 (NTFSTVSGKL) are enriched in polar residues. Pro residues predominate over residues 336 to 351 (QQPPTKVPPERPPPPK). Residues 342–358 (VPPERPPPPKLSATRRS) form an interaction with SH3GL1 region. Residues 365-374 (NRSSSDMDLQ) show a composition bias toward polar residues. S369 is modified (phosphoserine). SH3 domains follow at residues 415–477 (LSVP…PLDE), 495–554 (SGAP…VIID), 571–630 (VKGS…PVED), 661–720 (LPAE…PCPA), and 730–789 (PKGR…FLQI). Position 762 is a phosphoserine (S762).

Interacts with ADAM12. Isoform 4 and isoform 5 (but not isoform 1 and isoform 2) interact with ADAM9, ADAM10, ADAM15 and ADAM17. Interacts with SH3GL1 SH3 domain. Interacts via SH3 3 and SH3 4 or SH3 4 and SH3 5 domains with SOS2. Probably forms a trimeric complex with SH3GL1 and SOS2. Interacts with SH3YL1. In terms of tissue distribution, widely expressed with highest levels in heart, skeletal muscle, kidney, liver, placenta, small intestine and lung. Expressed at low levels in colon, thymus, spleen and leukocytes.

Its subcellular location is the cytoplasm. The protein localises to the nucleus. May play a role in regulating A disintegrin and metalloproteases (ADAMs) in the signaling of EGFR-ligand shedding. May be involved in suppression of Ras-induced cellular transformation and Ras-mediated activation of ELK1. Plays a role in the regulation of cell morphology and cytoskeletal organization. This chain is SH3 domain-containing protein 19 (SH3D19), found in Homo sapiens (Human).